The following is a 229-amino-acid chain: Large ribosomal subunit protein uL1 (229 aa).

Belongs to the universal ribosomal protein uL1 family. Part of the 50S ribosomal subunit.

Functionally, binds directly to 23S rRNA. The L1 stalk is quite mobile in the ribosome, and is involved in E site tRNA release. In terms of biological role, protein L1 is also a translational repressor protein, it controls the translation of the L11 operon by binding to its mRNA. The polypeptide is Large ribosomal subunit protein uL1 (Pasteurella multocida (strain Pm70)).